The chain runs to 175 residues: Large ribosomal subunit protein uL10 (175 aa).

Belongs to the universal ribosomal protein uL10 family. Part of the ribosomal stalk of the 50S ribosomal subunit. The N-terminus interacts with L11 and the large rRNA to form the base of the stalk. The C-terminus forms an elongated spine to which L12 dimers bind in a sequential fashion forming a multimeric L10(L12)X complex.

Functionally, forms part of the ribosomal stalk, playing a central role in the interaction of the ribosome with GTP-bound translation factors. The chain is Large ribosomal subunit protein uL10 from Methylococcus capsulatus (strain ATCC 33009 / NCIMB 11132 / Bath).